The primary structure comprises 353 residues: MSTAQKAKILQLIDSCCQNAKSTQLKSLSFVIGAVNGTTKEAKRTYIQEQCEFLEKLRQQKIREGRINILSMDAGVSNFAFSKMQLLNNDPLPKVLDWQKINLEEKFFQNLKKLSLNPAETSELVFNLTEYLFESMPIPDMFTIERQRTRTMSSRHILDPILKVNILEQILFSNLENKMKYTNKIPNTSKLRYMVCSSDPHRMTSYWCIPREETPTSSKKLKSNKHSKDSRIKLVKKILSTSILEGNSTSSTKLVEFIGVWNNRIRNALTKKKSFKLCDILEIQDNSGVRKDDDLADSFLHCLSWMEWLKNYESITELLNSKTLVKTQFGQVFEFCENKVQKLKFLQNTYNND.

Positions 293 and 294 each coordinate Mg(2+).

As to quaternary structure, homodimer. Mg(2+) is required as a cofactor.

The protein localises to the mitochondrion. It catalyses the reaction Endonucleolytic cleavage at a junction such as a reciprocal single-stranded crossover between two homologous DNA duplexes (Holliday junction).. Capable of resolving Holliday junctions. Specific for 4-way junctions. Seems to be important for the maintenance of mitochondrial DNA. Cleaves fixed junctions at the point of strand exchange. Cleaves after 5'-CT-3' sequence. The sequence is that of Cruciform cutting endonuclease 1, mitochondrial (CCE1) from Saccharomyces cerevisiae (strain ATCC 204508 / S288c) (Baker's yeast).